The primary structure comprises 200 residues: dITP/XTP pyrophosphatase (200 aa).

Thr7–Lys12 lines the substrate pocket. 2 residues coordinate Mg(2+): Glu38 and Asp73. Catalysis depends on Asp73, which acts as the Proton acceptor. Substrate is bound by residues Ser74, Phe154–Asp157, Lys177, and His182–Arg183.

This sequence belongs to the HAM1 NTPase family. Homodimer. It depends on Mg(2+) as a cofactor.

It catalyses the reaction XTP + H2O = XMP + diphosphate + H(+). The catalysed reaction is dITP + H2O = dIMP + diphosphate + H(+). The enzyme catalyses ITP + H2O = IMP + diphosphate + H(+). Pyrophosphatase that catalyzes the hydrolysis of nucleoside triphosphates to their monophosphate derivatives, with a high preference for the non-canonical purine nucleotides XTP (xanthosine triphosphate), dITP (deoxyinosine triphosphate) and ITP. Seems to function as a house-cleaning enzyme that removes non-canonical purine nucleotides from the nucleotide pool, thus preventing their incorporation into DNA/RNA and avoiding chromosomal lesions. This chain is dITP/XTP pyrophosphatase, found in Campylobacter jejuni subsp. jejuni serotype O:2 (strain ATCC 700819 / NCTC 11168).